The chain runs to 136 residues: Histone H3.1/H3.2 (136 aa).

The tract at residues methionine 1–lysine 43 is disordered. Position 5 is an N6,N6,N6-trimethyllysine; alternate (lysine 5). At lysine 5 the chain carries N6,N6-dimethyllysine; alternate. N6-methyllysine; alternate occurs at positions 5 and 10. Lysine 10 is modified (N6-acetyllysine; alternate). Residue serine 11 is modified to Phosphoserine. N6,N6-dimethyllysine; alternate is present on lysine 15. An N6-acetyllysine; alternate mark is found at lysine 15, lysine 19, lysine 24, lysine 28, and lysine 37. An N6-methyllysine; alternate mark is found at lysine 19, lysine 24, lysine 28, and lysine 37. N6,N6,N6-trimethyllysine; alternate occurs at positions 28 and 37. N6,N6-dimethyllysine; alternate occurs at positions 28 and 37. Lysine 57 and lysine 65 each carry N6-acetyllysine. Residue lysine 80 is modified to N6,N6,N6-trimethyllysine; alternate. Lysine 80 is subject to N6,N6-dimethyllysine; alternate. N6-methyllysine; alternate is present on lysine 80.

This sequence belongs to the histone H3 family. In terms of assembly, the nucleosome is a histone octamer containing two molecules each of H2A, H2B, H3 and H4 assembled in one H3-H4 heterotetramer and two H2A-H2B heterodimers. The octamer wraps approximately 147 bp of DNA. Post-translationally, phosphorylated to form H3S10ph. H3S10ph promotes subsequent H3K14ac formation and is required for transcriptional activation through TBP recruitment to the promoters. In terms of processing, mono-, di- and trimethylated by the COMPASS complex to form H3K4me1/2/3. H3K4me activates gene expression by regulating transcription elongation and plays a role in telomere length maintenance. H3K4me enrichment correlates with transcription levels, and occurs in a 5' to 3' gradient with H3K4me3 enrichment at the 5'-end of genes, shifting to H3K4me2 and then H3K4me1. Methylated by SET2 to form H3K36me. H3K36me represses gene expression. Methylated by DOT1 to form H3K79me. H3K79me is required for association of SIR proteins with telomeric regions and for telomeric silencing. The COMPASS-mediated formation of H3K4me2/3 and the DOT1-mediated formation of H3K79me require H2BK123ub1. Acetylation of histone H3 leads to transcriptional activation. H3K14ac formation by GCN5 is promoted by H3S10ph. H3K14ac can also be formed by ESA1. H3K56ac formation occurs predominantly in newly synthesized H3 molecules during G1, S and G2/M of the cell cycle and may be involved in DNA repair.

Its subcellular location is the nucleus. It is found in the chromosome. In terms of biological role, core component of nucleosome. Nucleosomes wrap and compact DNA into chromatin, limiting DNA accessibility to the cellular machineries which require DNA as a template. Histones thereby play a central role in transcription regulation, DNA repair, DNA replication and chromosomal stability. DNA accessibility is regulated via a complex set of post-translational modifications of histones, also called histone code, and nucleosome remodeling. This is Histone H3.1/H3.2 (HHT1) from Lodderomyces elongisporus (strain ATCC 11503 / CBS 2605 / JCM 1781 / NBRC 1676 / NRRL YB-4239) (Yeast).